A 604-amino-acid chain; its full sequence is ATP-dependent RNA helicase DED1 (604 aa).

Over residues 1–19 the composition is skewed to polar residues; it reads MAELSEQVQNLSINDNNEN. Residues 1–55 form a disordered region; the sequence is MAELSEQVQNLSINDNNENGYVPPHLRGKPRSARNNSSNYNNNNGGYNGGRGGGS. An N-acetylalanine modification is found at Ala-2. Positions 34-45 are enriched in low complexity; that stretch reads RNNSSNYNNNNG. The segment covering 46-55 has biased composition (gly residues); it reads GYNGGRGGGS. At Arg-51 the chain carries Omega-N-methylarginine. Arg-62 carries the post-translational modification Dimethylated arginine; alternate. Arg-62 carries the omega-N-methylarginine; alternate modification. Residues 67–76 show a composition bias toward gly residues; the sequence is NGGFFGGNNG. The disordered stretch occupies residues 67–94; sequence NGGFFGGNNGGSRSNGRSGGRWIDGKHV. Residues 142–170 carry the Q motif motif; that stretch reads TEFTSPPLDGLLLENIKLARFTKPTPVQK. Residue Lys-158 forms a Glycyl lysine isopeptide (Lys-Gly) (interchain with G-Cter in ubiquitin) linkage. Residues 173–362 form the Helicase ATP-binding domain; it reads VPIVANGRDL…RDFLSDYIFL (190 aa). 186–193 contributes to the ATP binding site; the sequence is AQTGSGKT. Phosphoserine is present on residues Ser-215, Ser-218, and Ser-263. Positions 306–309 match the DEAD box motif; that stretch reads DEAD. The Helicase C-terminal domain occupies 373–533; sequence NITQKVLYVE…EVPSFLKDAM (161 aa). A disordered region spans residues 533–604; that stretch reads MMSAPGSRSN…SGGSNNSSWW (72 aa). A phosphoserine mark is found at Ser-535, Ser-539, and Ser-543. Arg-545 carries the post-translational modification Dimethylated arginine; alternate. At Arg-545 the chain carries Omega-N-methylarginine; alternate. 2 positions are modified to phosphoserine: Ser-572 and Ser-576. Arg-578 is subject to Omega-N-methylarginine. Residues 584-604 show a composition bias toward low complexity; the sequence is GSDSKSSGWGNSGGSNNSSWW. Ser-598 is subject to Phosphoserine.

This sequence belongs to the DEAD box helicase family. DDX3/DED1 subfamily. As to quaternary structure, interacts with the L-A virus GAG protein and the whole L-A virus particles.

The protein resides in the cytoplasm. It carries out the reaction ATP + H2O = ADP + phosphate + H(+). Its function is as follows. ATP-binding RNA helicase involved in translation initiation. Remodels RNA in response to ADP and ATP concentrations by facilitating disruption, but also formation of RNA duplexes. Has weak ATP-dependent affinity for dsRNA, but strong ATP-dependent affinity for ssRNA. Acts as a virus host factor involved in the replication of the MBV and the L-A viruses by promoting the negative-strand RNA synthesis. May be involved in recognition of the preinitiation complex and DNA binding of the RNA polymerase III and play a role in mRNA splicing. The polypeptide is ATP-dependent RNA helicase DED1 (Saccharomyces cerevisiae (strain ATCC 204508 / S288c) (Baker's yeast)).